A 116-amino-acid polypeptide reads, in one-letter code: Protein Rev (116 aa).

Residue S8 is modified to Phosphoserine; by host CK2. The tract at residues 18-26 is homomultimerization; it reads LIKSLYQSN. Disordered regions lie at residues 20-46 and 84-116; these read KSLY…RRWR and DSSE…GAKE. The Nuclear localization signal and RNA-binding (RRE) motif lies at 34 to 50; sequence TRQARRNRRRRWRERQR. Residues 36-46 are compositionally biased toward basic residues; it reads QARRNRRRRWR. A Nuclear export signal and binding to XPO1 motif is present at residues 73–84; sequence LQLPPLERLTLD. The segment covering 88 to 98 has biased composition (polar residues); that stretch reads DCGTSGTQGVG. A phosphoserine; by host mark is found at S92 and S99.

The protein belongs to the HIV-1 REV protein family. As to quaternary structure, homomultimer; when bound to the RRE. Multimeric assembly is essential for activity and may involve XPO1. Binds to human KPNB1, XPO1, TNPO1, RANBP5 and IPO7. Interacts with the viral Integrase. Interacts with human KHDRBS1. Interacts with human NAP1; this interaction decreases Rev multimerization and stimulates its activity. Interacts with human DEAD-box helicases DDX3 and DDX24; these interactions may serve for viral RNA export to the cytoplasm and packaging, respectively. Interacts with human PSIP1; this interaction may inhibit HIV-1 DNA integration by promoting dissociation of the Integrase-LEDGF/p75 complex. In terms of processing, asymmetrically arginine dimethylated at one site by host PRMT6. Methylation impairs the RNA-binding activity and export of viral RNA from the nucleus to the cytoplasm. Post-translationally, phosphorylated by protein kinase CK2. Presence of, and maybe binding to the N-terminus of the regulatory beta subunit of CK2 is necessary for CK2-mediated Rev's phosphorylation.

Its subcellular location is the host nucleus. It is found in the host nucleolus. The protein localises to the host cytoplasm. In terms of biological role, escorts unspliced or incompletely spliced viral pre-mRNAs (late transcripts) out of the nucleus of infected cells. These pre-mRNAs carry a recognition sequence called Rev responsive element (RRE) located in the env gene, that is not present in fully spliced viral mRNAs (early transcripts). This function is essential since most viral proteins are translated from unspliced or partially spliced pre-mRNAs which cannot exit the nucleus by the pathway used by fully processed cellular mRNAs. Rev itself is translated from a fully spliced mRNA that readily exits the nucleus. Rev's nuclear localization signal (NLS) binds directly to KPNB1/Importin beta-1 without previous binding to KPNA1/Importin alpha-1. KPNB1 binds to the GDP bound form of RAN (Ran-GDP) and targets Rev to the nucleus. In the nucleus, the conversion from Ran-GDP to Ran-GTP dissociates Rev from KPNB1 and allows Rev's binding to the RRE in viral pre-mRNAs. Rev multimerization on the RRE via cooperative assembly exposes its nuclear export signal (NES) to the surface. Rev can then form a complex with XPO1/CRM1 and Ran-GTP, leading to nuclear export of the complex. Conversion from Ran-GTP to Ran-GDP mediates dissociation of the Rev/RRE/XPO1/RAN complex, so that Rev can return to the nucleus for a subsequent round of export. Beside KPNB1, also seems to interact with TNPO1/Transportin-1, RANBP5/IPO5 and IPO7/RANBP7 for nuclear import. The nucleoporin-like HRB/RIP is an essential cofactor that probably indirectly interacts with Rev to release HIV RNAs from the perinuclear region to the cytoplasm. The protein is Protein Rev of Human immunodeficiency virus type 1 group M subtype B (isolate RF/HAT3) (HIV-1).